We begin with the raw amino-acid sequence, 282 residues long: DNA-dependent metalloprotease WSS1 homolog 2 (282 aa).

Residues 1–75 form the Ubiquitin-like domain; the sequence is MELKFSCRGN…CLIRQDKDIV (75 aa). Residues 99–274 form the WLM domain; sequence PHTTPKPASI…LLAAAERRKQ (176 aa). Residue H202 coordinates Zn(2+). Residue E203 is part of the active site. H206 and H212 together coordinate Zn(2+). The tract at residues 234–282 is disordered; that stretch reads GKPGSYVSDRASYTPQQDNDDEDQKNHRRDLLLAAAERRKQSGSKVQKE. The segment covering 269 to 282 has biased composition (basic and acidic residues); sequence AERRKQSGSKVQKE.

It belongs to the peptidase M3 family. WSS1-like metalloprotease (WLM) subfamily. The cofactor is Zn(2+).

The protein resides in the cytoplasm. It localises to the nucleus. Functionally, metalloendopeptidase that acts selectively on DNA-binding proteins. DNA is needed to bring the protease and substrates together to enable proteolysis. Involved in the repair of toxic DNA-protein cross-links (DPCs) such as covalently trapped topoisomerase 1 (TOP1) adducts on DNA lesions or DPCs induced by reactive compounds such as formaldehyde. This Schizosaccharomyces pombe (strain 972 / ATCC 24843) (Fission yeast) protein is DNA-dependent metalloprotease WSS1 homolog 2.